Reading from the N-terminus, the 309-residue chain is Protein FdhE (309 aa).

It belongs to the FdhE family.

The protein localises to the cytoplasm. In terms of biological role, necessary for formate dehydrogenase activity. The sequence is that of Protein FdhE from Salmonella arizonae (strain ATCC BAA-731 / CDC346-86 / RSK2980).